The chain runs to 657 residues: Pyoverdine export ATP-binding/permease protein PvdT (657 aa).

Residues 6–245 enclose the ABC transporter domain; sequence IDLQDIRKSY…ASTNPGALQA (240 aa). 43-50 is an ATP binding site; the sequence is GASGSGKS. A run of 4 helical transmembrane segments spans residues 285 to 305, 539 to 559, 590 to 610, and 620 to 640; these read ALTL…LAVG, IAAI…LMTV, LSVV…GVLI, and LVAI…FGFM.

This sequence belongs to the ABC transporter superfamily. Macrolide exporter (TC 3.A.1.122) family. As to quaternary structure, part of the tripartite efflux system PvdRT-OpmQ, which is composed of an inner membrane component with both ATPase and permease domains, PvdT, a periplasmic membrane fusion protein, PvdR, and an outer membrane component, OpmQ.

It is found in the cell inner membrane. Part of the tripartite efflux system PvdRT-OpmQ required for the secretion into the extracellular milieu of the siderophore pyoverdine (PVD), which is involved in iron acquisition. This subunit binds PVD and drives its secretion by hydrolyzing ATP. The system is responsible for export of newly synthesized PVD after the final steps of biosynthesis have taken place in the periplasm. It is also responsible for recycling of PVD after internalization of ferri-PVD into the periplasm by the outer-membrane receptor FpvA and release of iron from PVD, thus making PVD available for new cycles of iron uptake. In Pseudomonas fluorescens (strain Pf0-1), this protein is Pyoverdine export ATP-binding/permease protein PvdT.